The following is a 149-amino-acid chain: Putative pre-16S rRNA nuclease (149 aa).

It belongs to the YqgF nuclease family.

The protein resides in the cytoplasm. In terms of biological role, could be a nuclease involved in processing of the 5'-end of pre-16S rRNA. This chain is Putative pre-16S rRNA nuclease, found in Heliobacterium modesticaldum (strain ATCC 51547 / Ice1).